A 552-amino-acid polypeptide reads, in one-letter code: Putative transport protein HS_1470 (552 aa).

Helical transmembrane passes span 4–24 (IAITICILALVAVIGLWIGHW), 28–48 (GVGLGIGGVLFGGIIVAHFMN), 67–87 (LILFVYTIGIQVGPGFFASLL), 95–115 (GLATLIVVLGAVSVFVLYKVV), and 157–177 (MAYAMAYPFGICGILLSMWLI). RCK C-terminal domains are found at residues 190–275 (KQFQ…VIGE) and 277–360 (IDMP…IIGN). Transmembrane regions (helical) follow at residues 370 to 390 (MLPVFIGIGLGVLLGSIPFYI), 402 to 424 (AGGPLVVALILARIGSVGKLYWF), 438 to 458 (IVLFLAVVGLKSGGGFVDTLV), 463 to 483 (LEWMGYGMFITFIPLMITGII), 495 to 515 (LCGLLAGSMTDPPALAFANAI), and 529 to 549 (VYPLSMFLRIMSPQLLAILLW).

The protein belongs to the AAE transporter (TC 2.A.81) family. YidE subfamily.

It is found in the cell membrane. This is Putative transport protein HS_1470 from Histophilus somni (strain 129Pt) (Haemophilus somnus).